A 250-amino-acid polypeptide reads, in one-letter code: Adapter protein MecA (250 aa).

It belongs to the MecA family. Homodimer.

Enables the recognition and targeting of unfolded and aggregated proteins to the ClpC protease or to other proteins involved in proteolysis. The sequence is that of Adapter protein MecA from Streptococcus sanguinis (strain SK36).